A 367-amino-acid polypeptide reads, in one-letter code: MALEKEEEASQNGAFCVLDGLYCEEETGFVEDDLDDDGDLDFLEKSDESVVKFQFLPLLDMFLWDDDEILSLISKENETNPCFGEQILDGFLVSCRKEALDWVLRVKSHYGFTSLTAILAVNYFDRFMTSIKLQTDKPWMSQLVAVASLSLAAKVEEIQVPLLLDLQVEEARYLFEAKTIQRMELLILSTLQWRMHPVTPISFFDHIIRRFGSKWHQQLDFCRKCERLLISVIADTRFMRYFPSVLATAIMILVFEELKPCDEVEYQSQITTLLKVNQEKVNECYELLLEHNPSKKRMMNLVDQDSPSGVLDFDDSSNSSWNVSTTASVSSSSSSPEPLLKRRRVQEQQMRLPSINRMFLDVLSSPR.

The span at 324-335 (STTASVSSSSSS) shows a compositional bias: low complexity. Residues 324 to 347 (STTASVSSSSSSPEPLLKRRRVQE) are disordered.

It belongs to the cyclin family. Cyclin D subfamily. Interacts with CDKA-1. As to expression, expressed in developing vegetative and floral primordia.

Promotes divisions in the guard cells (GCs) after the guard mother cells (GMC) symmetric division when in the presence of CDKA-1. The chain is Cyclin-D3-2 (CYCD3-2) from Arabidopsis thaliana (Mouse-ear cress).